A 325-amino-acid polypeptide reads, in one-letter code: Acetyl-coenzyme A carboxylase carboxyl transferase subunit alpha (325 aa).

A CoA carboxyltransferase C-terminal domain is found at 44 to 298 (QLEGRAEQLR…KTAILSNLEE (255 aa)).

Belongs to the AccA family. As to quaternary structure, acetyl-CoA carboxylase is a heterohexamer composed of biotin carboxyl carrier protein (AccB), biotin carboxylase (AccC) and two subunits each of ACCase subunit alpha (AccA) and ACCase subunit beta (AccD).

The protein localises to the cytoplasm. The catalysed reaction is N(6)-carboxybiotinyl-L-lysyl-[protein] + acetyl-CoA = N(6)-biotinyl-L-lysyl-[protein] + malonyl-CoA. It participates in lipid metabolism; malonyl-CoA biosynthesis; malonyl-CoA from acetyl-CoA: step 1/1. Functionally, component of the acetyl coenzyme A carboxylase (ACC) complex. First, biotin carboxylase catalyzes the carboxylation of biotin on its carrier protein (BCCP) and then the CO(2) group is transferred by the carboxyltransferase to acetyl-CoA to form malonyl-CoA. The sequence is that of Acetyl-coenzyme A carboxylase carboxyl transferase subunit alpha from Acaryochloris marina (strain MBIC 11017).